The primary structure comprises 298 residues: Acetate permease A (298 aa).

A disordered region spans residues 1 to 43 (MSAEQNHGLEKDVGGPAAPAAAAPNAPAAAPGAPPAGMSAEEH). Residues 14-37 (GGPAAPAAAAPNAPAAAPGAPPAG) show a composition bias toward low complexity. The next 6 helical transmembrane spans lie at 86 to 106 (APLG…INMG), 115 to 135 (IVIA…GMWE), 146 to 166 (ALSS…PGGF), 185 to 205 (SFGL…FCTL), 210 to 230 (AFFL…VGYI), and 245 to 265 (AGGF…LAGI).

Belongs to the acetate uptake transporter (AceTr) (TC 2.A.96) family.

The protein resides in the cell membrane. The protein localises to the vacuole membrane. High affinity monocarboxylate transporter (MCT) involved in acetate uptake. Unlike other activities involved in acetate utilization, acpA is dispensable for growth on the acetate precursor ethanol. In Emericella nidulans (strain FGSC A4 / ATCC 38163 / CBS 112.46 / NRRL 194 / M139) (Aspergillus nidulans), this protein is Acetate permease A.